Reading from the N-terminus, the 445-residue chain is Probable glycine dehydrogenase (decarboxylating) subunit 1 (445 aa).

The protein belongs to the GcvP family. N-terminal subunit subfamily. As to quaternary structure, the glycine cleavage system is composed of four proteins: P, T, L and H. In this organism, the P 'protein' is a heterodimer of two subunits.

It carries out the reaction N(6)-[(R)-lipoyl]-L-lysyl-[glycine-cleavage complex H protein] + glycine + H(+) = N(6)-[(R)-S(8)-aminomethyldihydrolipoyl]-L-lysyl-[glycine-cleavage complex H protein] + CO2. Functionally, the glycine cleavage system catalyzes the degradation of glycine. The P protein binds the alpha-amino group of glycine through its pyridoxal phosphate cofactor; CO(2) is released and the remaining methylamine moiety is then transferred to the lipoamide cofactor of the H protein. The chain is Probable glycine dehydrogenase (decarboxylating) subunit 1 from Anaeromyxobacter dehalogenans (strain 2CP-C).